The sequence spans 369 residues: uncharacterized protein (369 aa).

The residue at position 184 (lysine 184) is an N6-(pyridoxal phosphate)lysine.

The protein belongs to the class-V pyridoxal-phosphate-dependent aminotransferase family. It depends on pyridoxal 5'-phosphate as a cofactor.

This is an uncharacterized protein from Helicobacter pylori (strain J99 / ATCC 700824) (Campylobacter pylori J99).